The sequence spans 263 residues: 4-hydroxy-2-oxo-heptane-1,7-dioate aldolase (263 aa).

The Proton acceptor role is filled by H45. Residue Q147 coordinates substrate. An a divalent metal cation-binding site is contributed by E149. Positions 174 and 175 each coordinate substrate. D175 serves as a coordination point for a divalent metal cation.

The protein belongs to the HpcH/HpaI aldolase family. In terms of assembly, homohexamer; trimer of dimers. A divalent metal cation serves as cofactor.

It catalyses the reaction 4-hydroxy-2-oxoheptanedioate = succinate semialdehyde + pyruvate. It functions in the pathway aromatic compound metabolism; 4-hydroxyphenylacetate degradation; pyruvate and succinate semialdehyde from 4-hydroxyphenylacetate: step 7/7. Its function is as follows. Catalyzes the reversible retro-aldol cleavage of 4-hydroxy-2-ketoheptane-1,7-dioate (HKHD) to pyruvate and succinic semialdehyde. The chain is 4-hydroxy-2-oxo-heptane-1,7-dioate aldolase from Salmonella newport (strain SL254).